Reading from the N-terminus, the 122-residue chain is Large ribosomal subunit protein uL14 (122 aa).

This sequence belongs to the universal ribosomal protein uL14 family. In terms of assembly, part of the 50S ribosomal subunit. Forms a cluster with proteins L3 and L19. In the 70S ribosome, L14 and L19 interact and together make contacts with the 16S rRNA in bridges B5 and B8.

Its function is as follows. Binds to 23S rRNA. Forms part of two intersubunit bridges in the 70S ribosome. The protein is Large ribosomal subunit protein uL14 of Thermosynechococcus vestitus (strain NIES-2133 / IAM M-273 / BP-1).